Here is a 331-residue protein sequence, read N- to C-terminus: Sulfate/thiosulfate import ATP-binding protein CysA (331 aa).

An ABC transporter domain is found at 2-232; the sequence is ITVTNARKNY…PANEFVMSFL (231 aa). 34–41 is a binding site for ATP; sequence GPSGSGKS.

This sequence belongs to the ABC transporter superfamily. Sulfate/tungstate importer (TC 3.A.1.6) family. As to quaternary structure, the complex is composed of two ATP-binding proteins (CysA), two transmembrane proteins (CysT and CysW) and a solute-binding protein (CysP).

Its subcellular location is the cell membrane. It carries out the reaction sulfate(out) + ATP + H2O = sulfate(in) + ADP + phosphate + H(+). The enzyme catalyses thiosulfate(out) + ATP + H2O = thiosulfate(in) + ADP + phosphate + H(+). Functionally, part of the ABC transporter complex CysAWTP involved in sulfate/thiosulfate import. Responsible for energy coupling to the transport system. The polypeptide is Sulfate/thiosulfate import ATP-binding protein CysA (Nocardia farcinica (strain IFM 10152)).